Reading from the N-terminus, the 205-residue chain is MRTIDKRIAPNVRLAATLVARAPALTLAYDARCKSRLAATLDTGEDVALVLPRGTVLRDGDVLVADDGALVRVAAAHEAVLLVRAPDALTLTRAAYHLGNRHTPVEVGAGCLKLEYDPVLADMLTRLGATVERASAPFQPEAGAYGGGHRHGHDATFAEDYALAQQVFDEHHGHSHSHDHDHDHDHDHDHQHGPCCSHGHHHGHR.

The span at 171 to 192 (HHGHSHSHDHDHDHDHDHDHQH) shows a compositional bias: basic and acidic residues. A disordered region spans residues 171 to 205 (HHGHSHSHDHDHDHDHDHDHQHGPCCSHGHHHGHR).

The protein belongs to the UreE family.

It localises to the cytoplasm. Involved in urease metallocenter assembly. Binds nickel. Probably functions as a nickel donor during metallocenter assembly. The chain is Urease accessory protein UreE from Burkholderia pseudomallei (strain K96243).